The primary structure comprises 274 residues: Long chain fatty acid elongase 2 (274 aa).

The next 7 membrane-spanning stretches (helical) occupy residues 29 to 49 (MSTFVPLSYKIMIGYLVTIYF), 73 to 93 (FSLFSGIAAYKLIPELFGVFM), 115 to 135 (FWGWAFVMSKAPELGDTMFLV), 140 to 160 (PVIFMHWYHHALTFVYAVVTY), 170 to 190 (SLALNLAVHTVMYFYFAVRAL), 201 to 221 (FITTIQIVQFVISCYIFGHLV), and 238 to 258 (VLSIGGLMYISYLFLFAKFFY).

It belongs to the ELO family. In terms of tissue distribution, expressed in various tissues and parts of the body, including the ventral cord, pharyngeal muscles, uterus, and the tail, and most strongly in intestinal cells.

The protein resides in the membrane. It catalyses the reaction hexadecanoyl-CoA + malonyl-CoA + H(+) = 3-oxooctadecanoyl-CoA + CO2 + CoA. Its pathway is lipid metabolism; fatty acid biosynthesis. In terms of biological role, catalyzes the first and rate-limiting reaction of the four reactions that constitute the long-chain fatty acids elongation cycle. Uses malonyl-CoA to add 2 carbons per cycle to the chain of long-chain fatty acids. Condensing enzyme responsible for the elongation of palmitate (hexadecanoate, 16:0), also involved in polyunsaturated fatty acid (PUFA) biosynthesis. The polypeptide is Long chain fatty acid elongase 2 (Caenorhabditis elegans).